The sequence spans 795 residues: Protocadherin beta-4 (795 aa).

An N-terminal signal peptide occupies residues 1–27 (MKKLGRIHPNRQVLAFILMVFLSQVRL). Over 28–689 (EPIRYSVLEE…SQADSLTVYL (662 aa)) the chain is Extracellular. Cadherin domains are found at residues 34-132 (VLEE…SPVF), 137-241 (VLLK…APEF), 246-346 (YGVQ…PPEL), 351-450 (LTSS…APAF), and 455-560 (YTLF…SPFV). N-linked (GlcNAc...) asparagine glycosylation is present at Asn183. A glycan (N-linked (GlcNAc...) asparagine) is linked at Asn417. An N-linked (GlcNAc...) asparagine glycan is attached at Asn566. The Cadherin 6 domain occupies 567–670 (GSAPCTELVP…LVDGFSQPYL (104 aa)). The chain crosses the membrane as a helical span at residues 690–710 (VVALASVSSLFLFSVLLFVAV). Residues 711-795 (RLCRRSRAAS…PKFRNSLVFS (85 aa)) lie on the Cytoplasmic side of the membrane.

It localises to the cell membrane. In terms of biological role, potential calcium-dependent cell-adhesion protein. May be involved in the establishment and maintenance of specific neuronal connections in the brain. The chain is Protocadherin beta-4 (PCDHB4) from Pan troglodytes (Chimpanzee).